Reading from the N-terminus, the 227-residue chain is Deoxyribose-phosphate aldolase (227 aa).

The active-site Proton donor/acceptor is the aspartate 96. The active-site Schiff-base intermediate with acetaldehyde is the lysine 158. Lysine 187 acts as the Proton donor/acceptor in catalysis.

This sequence belongs to the DeoC/FbaB aldolase family. DeoC type 1 subfamily.

It is found in the cytoplasm. The catalysed reaction is 2-deoxy-D-ribose 5-phosphate = D-glyceraldehyde 3-phosphate + acetaldehyde. It participates in carbohydrate degradation; 2-deoxy-D-ribose 1-phosphate degradation; D-glyceraldehyde 3-phosphate and acetaldehyde from 2-deoxy-alpha-D-ribose 1-phosphate: step 2/2. Functionally, catalyzes a reversible aldol reaction between acetaldehyde and D-glyceraldehyde 3-phosphate to generate 2-deoxy-D-ribose 5-phosphate. The chain is Deoxyribose-phosphate aldolase from Desulfotalea psychrophila (strain LSv54 / DSM 12343).